The following is a 789-amino-acid chain: MAPAESGVSPRRNPSQLSWMNLSSNLILAYQSFGVVYGDLSTSPLYVFPSTFIGKLHKHHNEDAVFGAFSLIFWTLTLIPLLKYLLVLLSADDNGEGGTFALYSLLCRHAKLSLLPNQQAADEELSAYKFGPSTDTVTSSPFRTFLEKHKRLRTALLLVVLFGAAMVIGDGVLTPALSVLSSLSGLQATEKNVTDGELLVLACVILVGLFALQHCGTHRVAFMFAPIVIIWLISIFFIGLYNIIRWNPKIIHAVSPLYIIKFFRVTGQDGWISLGGVLLSVTGTEAMFANLGHFTSVSIRVAFAVVVYPCLVVQYMGQAAFLSKNLGSIPNSFYDSVPDPVFWPVFVIATLAAIVGSQAVITTTFSIIKQCHALGCFPRIKVVHTSKHIYGQIYIPEINWILMILTLAMAIGFRDTTLIGNAYGIACMVVMFITTFFMALVIVVVWQKSCFLAALFLGTLWIIEGVYLSAALMKVTEGGWVPFVLTFIFMIAMYVWHYGTRRKYSFDLHNKVSLKWLLGLGPSLGIVRVPGIGLVYSELATGVPAIFSHFVTNLPAFHKVVVFVCVKSVPVPHVSPEERFLIGRVCPKPYRMYRCIVRYGYKDIQREDGDFENQLVQSIAEFIQMEASDLQSSASESQSNDGRMAVLSSQKSLSNSILTVSEVEEIDYADPTIQSSKSMTLQSLRSVYEDEYPQGQVRRRHVRFQLTASSGGMGSSVREELMDLIRAKEAGVAYIMGHSYVKSRKSSSWLKKMAIDIGYSFLRKNCRGPAVALNIPHISLIEVGMIYYV.

Residues 1–32 (MAPAESGVSPRRNPSQLSWMNLSSNLILAYQS) are Cytoplasmic-facing. The residue at position 9 (Ser9) is a Phosphoserine. Residues 33-53 (FGVVYGDLSTSPLYVFPSTFI) form a helical membrane-spanning segment. Residues 54 to 68 (GKLHKHHNEDAVFGA) are Extracellular-facing. Residues 69-89 (FSLIFWTLTLIPLLKYLLVLL) form a helical membrane-spanning segment. The Cytoplasmic segment spans residues 90 to 154 (SADDNGEGGT…FLEKHKRLRT (65 aa)). A helical transmembrane segment spans residues 155 to 175 (ALLLVVLFGAAMVIGDGVLTP). Residues 176–195 (ALSVLSSLSGLQATEKNVTD) lie on the Extracellular side of the membrane. The helical transmembrane segment at 196–216 (GELLVLACVILVGLFALQHCG) threads the bilayer. At 217 to 219 (THR) the chain is on the cytoplasmic side. The chain crosses the membrane as a helical span at residues 220–240 (VAFMFAPIVIIWLISIFFIGL). Residues 241 to 270 (YNIIRWNPKIIHAVSPLYIIKFFRVTGQDG) lie on the Extracellular side of the membrane. The helical transmembrane segment at 271–291 (WISLGGVLLSVTGTEAMFANL) threads the bilayer. The Cytoplasmic segment spans residues 292-300 (GHFTSVSIR). Residues 301–321 (VAFAVVVYPCLVVQYMGQAAF) traverse the membrane as a helical segment. Over 322-340 (LSKNLGSIPNSFYDSVPDP) the chain is Extracellular. Residues 341–361 (VFWPVFVIATLAAIVGSQAVI) traverse the membrane as a helical segment. The Cytoplasmic segment spans residues 362–392 (TTTFSIIKQCHALGCFPRIKVVHTSKHIYGQ). A helical membrane pass occupies residues 393–413 (IYIPEINWILMILTLAMAIGF). The Extracellular portion of the chain corresponds to 414–424 (RDTTLIGNAYG). The chain crosses the membrane as a helical span at residues 425 to 445 (IACMVVMFITTFFMALVIVVV). Residues 446-450 (WQKSC) lie on the Cytoplasmic side of the membrane. The chain crosses the membrane as a helical span at residues 451–471 (FLAALFLGTLWIIEGVYLSAA). At 472–478 (LMKVTEG) the chain is on the extracellular side. Residues 479-499 (GWVPFVLTFIFMIAMYVWHYG) traverse the membrane as a helical segment. At 500–789 (TRRKYSFDLH…LIEVGMIYYV (290 aa)) the chain is on the cytoplasmic side.

It belongs to the HAK/KUP transporter (TC 2.A.72.3) family. In terms of tissue distribution, detected at very low levels in roots, stems, leaves and flowers of mature plants and strongly expressed in the roots of potassium-starved plants.

The protein resides in the cell membrane. High-affinity potassium transporter. The polypeptide is Potassium transporter 4 (POT4) (Arabidopsis thaliana (Mouse-ear cress)).